Here is a 148-residue protein sequence, read N- to C-terminus: Troponin C (148 aa).

EF-hand domains are found at residues 8–43, 44–79, 81–116, and 117–148; these read KQFN…LALH, VSDD…KVQE, EDER…LGDD, and LNDD…LMLG. Ca(2+) contacts are provided by D130, D132, S134, T136, and E141.

The protein belongs to the troponin C family.

Troponin is the central regulatory protein of striated muscle contraction. Tn consists of three components: Tn-I which is the inhibitor of actomyosin ATPase, Tn-T which contains the binding site for tropomyosin and Tn-C. The binding of calcium to Tn-C abolishes the inhibitory action of Tn on actin filaments. The protein is Troponin C of Todarodes pacificus (Japanese flying squid).